The following is a 1382-amino-acid chain: Hepatocyte growth factor receptor (1382 aa).

A signal peptide spans 1–24; sequence MKAPAVLAPGILVLLFTLVPRSHG. Residues 25–933 are Extracellular-facing; it reads ECKEALVKSE…VIVQPDQNFM (909 aa). The 490-residue stretch at 27–516 folds into the Sema domain; it reads KEALVKSEMN…TGNKITKIPL (490 aa). An N-linked (GlcNAc...) asparagine glycan is attached at Asn45. Cystine bridges form between Cys95–Cys101, Cys98–Cys160, Cys133–Cys141, and Cys173–Cys176. An N-linked (GlcNAc...) asparagine glycan is attached at Asn106. 2 N-linked (GlcNAc...) asparagine glycosylation sites follow: Asn203 and Asn359. 2 cysteine pairs are disulfide-bonded: Cys299–Cys364 and Cys386–Cys398. N-linked (GlcNAc...) asparagine glycosylation is found at Asn400 and Asn406. Cystine bridges form between Cys521/Cys539, Cys527/Cys562, Cys530/Cys546, and Cys542/Cys552. 3 consecutive IPT/TIG domains span residues 564–656, 658–740, and 743–837; these read PAIY…FSYV, PVIT…FSYR, and PIVD…LTYV. O-linked (Man) threonine glycosylation occurs at Thr583. 3 N-linked (GlcNAc...) asparagine glycosylation sites follow: Asn608, Asn614, and Asn636. 2 O-linked (Man) threonine glycosylation sites follow: Thr677 and Thr762. N-linked (GlcNAc...) asparagine glycosylation is found at Asn786 and Asn880. A helical transmembrane segment spans residues 934 to 956; the sequence is GLIVGGVSISIILLLLLGLFLWL. Residues 957 to 1382 are Cytoplasmic-facing; that stretch reads KKKKRIKDLG…QDNVDGTVDT (426 aa). Ser967 carries the phosphoserine modification. Position 978 is a phosphothreonine (Thr978). A phosphoserine mark is found at Ser991, Ser998, and Ser1001. Tyr1004 carries the phosphotyrosine modification. The 268-residue stretch at 1079–1346 folds into the Protein kinase domain; sequence VHFSEVIGRG…RISTIFSTFI (268 aa). ATP contacts are provided by residues 1085–1093 and Lys1111; that span reads IGRGHFGCV. Asp1205 functions as the Proton acceptor in the catalytic mechanism. Residues 1213–1382 are interaction with RANBP9; it reads LDEKFTVKVA…QDNVDGTVDT (170 aa). Tyr1231 bears the Phosphotyrosine mark. Residues Tyr1235 and Tyr1236 each carry the phosphotyrosine; by autocatalysis modification. Position 1290 is a phosphothreonine (Thr1290). The interval 1321-1360 is interaction with MUC20; that stretch reads WHPKAEMRPSFSELVSRISTIFSTFIGEHYVHVNATYVNV. A phosphotyrosine; by autocatalysis mark is found at Tyr1350 and Tyr1357. At Tyr1366 the chain carries Phosphotyrosine.

The protein belongs to the protein kinase superfamily. Tyr protein kinase family. In terms of assembly, heterodimer made of an alpha chain (50 kDa) and a beta chain (145 kDa) which are disulfide linked. Binds PLXNB1. Interacts when phosphorylated with downstream effectors including STAT3, PIK3R1, SRC, PCLG1, GRB2 and GAB1. Interacts with SPSB1, SPSB2 and SPSB4. Interacts with INPP5D/SHIP1. When phosphorylated at Tyr-1357, interacts with INPPL1/SHIP2. Interacts with RANBP9 and RANBP10, as well as SPSB1, SPSB2, SPSB3 and SPSB4. SPSB1 binding occurs in the presence and in the absence of HGF, however HGF treatment has a positive effect on this interaction. Interacts with MUC20; prevents interaction with GRB2 and suppresses hepatocyte growth factor-induced cell proliferation. Interacts with GRB10. Interacts with PTPN1 and PTPN2. Interacts with HSP90AA1 and HSP90AB1; the interaction suppresses MET kinase activity. Interacts with tensin TNS3. Interacts (when phosphorylated) with tensin TNS4 (via SH2 domain); the interaction increases MET protein stability by inhibiting MET endocytosis and subsequent lysosomal degradation. Post-translationally, autophosphorylated in response to ligand binding on Tyr-1235 and Tyr-1236 in the kinase domain leading to further phosphorylation of Tyr-1350 and Tyr-1357 in the C-terminal multifunctional docking site. Dephosphorylated by PTPRJ at Tyr-1350 and Tyr-1366. Dephosphorylated by PTPN1 and PTPN2. In terms of processing, ubiquitinated. Ubiquitination by CBL regulates the receptor stability and activity through proteasomal degradation. O-mannosylation of IPT/TIG domains by TMEM260 is required for protein maturation. O-mannosylated residues are composed of single mannose glycans that are not elongated or modified.

The protein resides in the membrane. The enzyme catalyses L-tyrosyl-[protein] + ATP = O-phospho-L-tyrosyl-[protein] + ADP + H(+). With respect to regulation, in its inactive state, the C-terminal tail interacts with the catalytic domain and inhibits the kinase activity. Upon ligand binding, the C-terminal tail is displaced and becomes phosphorylated, thus increasing the kinase activity. Functionally, receptor tyrosine kinase that transduces signals from the extracellular matrix into the cytoplasm by binding to hepatocyte growth factor/HGF ligand. Regulates many physiological processes including proliferation, scattering, morphogenesis and survival. Ligand binding at the cell surface induces autophosphorylation of MET on its intracellular domain that provides docking sites for downstream signaling molecules. Following activation by ligand, interacts with the PI3-kinase subunit PIK3R1, PLCG1, SRC, GRB2, STAT3 or the adapter GAB1. Recruitment of these downstream effectors by MET leads to the activation of several signaling cascades including the RAS-ERK, PI3 kinase-AKT, or PLCgamma-PKC. The RAS-ERK activation is associated with the morphogenetic effects while PI3K/AKT coordinates prosurvival effects. During embryonic development, MET signaling plays a role in gastrulation, development and migration of muscles and neuronal precursors, angiogenesis and kidney formation. In adults, participates in wound healing as well as organ regeneration and tissue remodeling. Also promotes differentiation and proliferation of hematopoietic cells. This chain is Hepatocyte growth factor receptor (MET), found in Oryctolagus cuniculus (Rabbit).